The sequence spans 142 residues: DNA polymerase III subunit chi (142 aa).

This sequence belongs to the DNA polymerase III chi/HolC chain family. DNA polymerase III contains a core (composed of alpha, epsilon and theta chains) that associates with a tau subunit. This core dimerizes to form the POLIII' complex. PolIII' associates with the gamma complex (composed of gamma, delta, delta', psi and chi chains) and with the beta chain to form the complete DNA polymerase III complex. Interacts directly with the psi subunit (holD). The only subunit of the DNA polymerase III holoenzyme known to interact with single-stranded DNA binding protein (SSB).

The enzyme catalyses DNA(n) + a 2'-deoxyribonucleoside 5'-triphosphate = DNA(n+1) + diphosphate. Functionally, part of the beta sliding clamp loading complex, which hydrolyzes ATP to load the beta clamp onto primed DNA to form the DNA replication pre-initiation complex. DNA polymerase III is a complex, multichain enzyme responsible for most of the replicative synthesis in bacteria. This DNA polymerase also exhibits 3' to 5' exonuclease activity. The polypeptide is DNA polymerase III subunit chi (Pseudomonas aeruginosa (strain ATCC 15692 / DSM 22644 / CIP 104116 / JCM 14847 / LMG 12228 / 1C / PRS 101 / PAO1)).